The sequence spans 352 residues: Probable protein kinase DDB_G0291842 (352 aa).

The interval 1–57 (MRPLPDQSAFEDKSELVSKKQKNEDENNENRSPETPRTPKVCPKTPTKTPLRTPTKN) is disordered. A compositionally biased stretch (basic and acidic residues) spans 10–34 (FEDKSELVSKKQKNEDENNENRSPE). Low complexity predominate over residues 38-56 (TPKVCPKTPTKTPLRTPTK). The Protein kinase domain occupies 77–331 (FEYINQIGEG…IQSLLKYDKL (255 aa)). ATP-binding positions include 83 to 91 (IGEGSFAKV) and lysine 106. Aspartate 207 serves as the catalytic Proton acceptor. Asparagine 212 and aspartate 225 together coordinate Mg(2+).

It belongs to the protein kinase superfamily. Ser/Thr protein kinase family. WEE1 subfamily.

The catalysed reaction is L-seryl-[protein] + ATP = O-phospho-L-seryl-[protein] + ADP + H(+). The enzyme catalyses L-threonyl-[protein] + ATP = O-phospho-L-threonyl-[protein] + ADP + H(+). This Dictyostelium discoideum (Social amoeba) protein is Probable protein kinase DDB_G0291842.